Reading from the N-terminus, the 37-residue chain is Peptide encoded by miPEP164a (37 aa).

Functionally, regulatory peptide encoded by the primary transcript (pri-miR164a) of the microRNA miR164a that enhances the accumulation of its corresponding mature miRNA. Acts probably as a transcriptional activator of its corresponding pri-miRNA. The sequence is that of Peptide encoded by miPEP164a from Arabidopsis thaliana (Mouse-ear cress).